The sequence spans 508 residues: MGLPWYRVHTVVLNDPGRLLAVHIMHTALVAGWAGSMALYELAVFDPSDPVLDPMWRQGMFVIPFMTRLGITNSWGGWSITGGTITNPGIWSYEGVAGAHIVFSGLCFLAAIWHWVYWDLEIFCDERTGKPSLDLPKIFGIHLFLSGVACFGFGAFHVTGLYGPGIWVSDPYGLTGKVQSVNPAWGVEGFDPFVPGGIASHHIAAGTLGILAGLFHLSVRPPQRLYKGLRMGNIETVLSSSIAAVFFAAFVVAGTMWYGSATTPIELFGPTRYQWDQGYFQQEIYRRVGTGLAENQSLSEAWSKIPEKLAFYDYIGNNPAKGGLFRAGSMDNGDGIAIGWLGHPLFRDKEGRELFVRRMPTFFETFPVVLVDGDGIVRADVPFRRAESKYSVEQVGVTVEFYGGELNGVSYSDPATVKKYARRAQLGEIFELDRATLKSDGVFRSSPRGWFTFGHASFALLFFFGHIWHGSRTLFRDVFAGIDPDLDAQVEFGAFQKLGDPTTRRQVV.

Transmembrane regions (helical) follow at residues 21–36 (AVHI…WAGS), 101–115 (IVFS…IWHW), 140–156 (GIHL…FGAF), 203–218 (IAAG…FHLS), 237–252 (VLSS…AFVV), and 457–472 (SFAL…HGSR).

This sequence belongs to the PsbB/PsbC family. PsbB subfamily. PSII is composed of 1 copy each of membrane proteins PsbA, PsbB, PsbC, PsbD, PsbE, PsbF, PsbH, PsbI, PsbJ, PsbK, PsbL, PsbM, PsbT, PsbX, PsbY, PsbZ, Psb30/Ycf12, at least 3 peripheral proteins of the oxygen-evolving complex and a large number of cofactors. It forms dimeric complexes. The cofactor is Binds multiple chlorophylls. PSII binds additional chlorophylls, carotenoids and specific lipids..

The protein localises to the plastid. The protein resides in the chloroplast thylakoid membrane. Functionally, one of the components of the core complex of photosystem II (PSII). It binds chlorophyll and helps catalyze the primary light-induced photochemical processes of PSII. PSII is a light-driven water:plastoquinone oxidoreductase, using light energy to abstract electrons from H(2)O, generating O(2) and a proton gradient subsequently used for ATP formation. The sequence is that of Photosystem II CP47 reaction center protein from Populus trichocarpa (Western balsam poplar).